The primary structure comprises 213 residues: Calcineurin B-like protein 8 (213 aa).

G2 carries the N-myristoyl glycine lipid modification. 4 consecutive EF-hand domains span residues 31-66 (EVEA…RNSN), 67-102 (KKNL…FHPE), 104-139 (PLGD…LLNE), and 148-183 (AVEQ…NPAL). The Ca(2+) site is built by D161, N163, D165, K167, and E172.

It belongs to the calcineurin regulatory subunit family. As to quaternary structure, homodimer. As to expression, expressed at low levels in roots, shoots, culms, leaves and young spikelets.

Its subcellular location is the cell membrane. Its function is as follows. Acts as a calcium sensor. May function as positive regulator of salt stress responses. CBL proteins interact with CIPK serine-threonine protein kinases. Binding of a CBL protein to the regulatory NAF domain of a CIPK protein lead to the activation of the kinase in a calcium-dependent manner. In Oryza sativa subsp. japonica (Rice), this protein is Calcineurin B-like protein 8 (CBL8).